The following is a 337-amino-acid chain: Metacaspase III c (337 aa).

Propeptides lie at residues 1 to 6 (MGFLRR) and 116 to 125 (VPPAATGTRR). At Cys202 the chain carries Cysteine sulfenic acid (-SOH). Residues Cys202 and Cys259 are joined by a disulfide bond. His207 is a catalytic residue. Residues Asp224, Asp240, and Asp241 each contribute to the Ca(2+) site. The active site involves Cys264. Residue Asp271 coordinates Ca(2+). The propeptide occupies 290 to 337 (NFDFKKLLGKFGIDDFDKFGGEALGKINGDALGKVGKDALGKLNKFFG).

It belongs to the peptidase C14B family. Post-translationally, auto-proteolytic cleavage into a large and a small subunit which probably remain associated by non-covalent bonds. In terms of processing, following oxidative stress, the oxidation of Cys-202 leads to the formation of a disulfide bond between Cys-202 and Cys-259 which enhances catalytic activity.

With respect to regulation, activated by Ca(2+). Functionally, cysteine protease that cleaves specifically after arginine residues. The polypeptide is Metacaspase III c (Phaeodactylum tricornutum (strain CCAP 1055/1)).